The primary structure comprises 392 residues: Acetyl-CoA acetyltransferase (392 aa).

Cys-89 (acyl-thioester intermediate) is an active-site residue. Catalysis depends on proton acceptor residues His-348 and Cys-378.

It belongs to the thiolase-like superfamily. Thiolase family. Homotetramer.

It localises to the cytoplasm. The catalysed reaction is 2 acetyl-CoA = acetoacetyl-CoA + CoA. It functions in the pathway biopolymer metabolism; poly-(R)-3-hydroxybutanoate biosynthesis. Its pathway is metabolic intermediate biosynthesis; (R)-mevalonate biosynthesis; (R)-mevalonate from acetyl-CoA: step 1/3. In Shinella zoogloeoides (Crabtreella saccharophila), this protein is Acetyl-CoA acetyltransferase.